A 266-amino-acid chain; its full sequence is Sesquipedalian-1 (266 aa).

In terms of domain architecture, PH spans 17 to 113; sequence PVDNAGFLYK…WVKALSRASF (97 aa). Residues 165 to 184 are disordered; that stretch reads QPSVAPQRPPPLPPRRRASA. Serine 183 is modified (phosphoserine). The short motif at 191–203 is the F&amp;H element; sequence SFAQLHARYGLEV.

The protein belongs to the sesquipedalian family. As to quaternary structure, forms homodimers and heterodimers with PHETA2. Interacts with OCRL and INPP5B. Interaction with OCRL may be important for endosomal morphology and function.

The protein localises to the early endosome. It localises to the recycling endosome. The protein resides in the golgi apparatus. Its subcellular location is the trans-Golgi network. It is found in the cytoplasmic vesicle. The protein localises to the clathrin-coated vesicle. Its function is as follows. Plays a role in endocytic trafficking. Required for receptor recycling from endosomes, both to the trans-Golgi network and the plasma membrane. This is Sesquipedalian-1 from Mus musculus (Mouse).